Reading from the N-terminus, the 671-residue chain is Arginine--tRNA ligase (671 aa).

The 'HIGH' region motif lies at 124–134 (PNVAKPMHVGH). The segment at 223–254 (KSDAKTAKEVSDQSESDENLKPKDKKKLRKNA) is disordered. The segment covering 224–233 (SDAKTAKEVS) has biased composition (basic and acidic residues).

Belongs to the class-I aminoacyl-tRNA synthetase family. Monomer.

It localises to the cytoplasm. It catalyses the reaction tRNA(Arg) + L-arginine + ATP = L-arginyl-tRNA(Arg) + AMP + diphosphate. The sequence is that of Arginine--tRNA ligase from Rhodopirellula baltica (strain DSM 10527 / NCIMB 13988 / SH1).